The following is a 73-amino-acid chain: DNA-directed RNA polymerase subunit omega (73 aa).

This sequence belongs to the RNA polymerase subunit omega family. In terms of assembly, in cyanobacteria the RNAP catalytic core is composed of 2 alpha, 1 beta, 1 beta', 1 gamma and 1 omega subunit. When a sigma factor is associated with the core the holoenzyme is formed, which can initiate transcription.

The enzyme catalyses RNA(n) + a ribonucleoside 5'-triphosphate = RNA(n+1) + diphosphate. Its function is as follows. Promotes RNA polymerase assembly. Latches the N- and C-terminal regions of the beta' subunit thereby facilitating its interaction with the beta and alpha subunits. The polypeptide is DNA-directed RNA polymerase subunit omega (Gloeobacter violaceus (strain ATCC 29082 / PCC 7421)).